The chain runs to 499 residues: Aspartyl/glutamyl-tRNA(Asn/Gln) amidotransferase subunit B (499 aa).

It belongs to the GatB/GatE family. GatB subfamily. In terms of assembly, heterotrimer of A, B and C subunits.

The catalysed reaction is L-glutamyl-tRNA(Gln) + L-glutamine + ATP + H2O = L-glutaminyl-tRNA(Gln) + L-glutamate + ADP + phosphate + H(+). It catalyses the reaction L-aspartyl-tRNA(Asn) + L-glutamine + ATP + H2O = L-asparaginyl-tRNA(Asn) + L-glutamate + ADP + phosphate + 2 H(+). Allows the formation of correctly charged Asn-tRNA(Asn) or Gln-tRNA(Gln) through the transamidation of misacylated Asp-tRNA(Asn) or Glu-tRNA(Gln) in organisms which lack either or both of asparaginyl-tRNA or glutaminyl-tRNA synthetases. The reaction takes place in the presence of glutamine and ATP through an activated phospho-Asp-tRNA(Asn) or phospho-Glu-tRNA(Gln). This is Aspartyl/glutamyl-tRNA(Asn/Gln) amidotransferase subunit B from Bartonella tribocorum (strain CIP 105476 / IBS 506).